The following is a 181-amino-acid chain: UPF0316 protein Bcer98_2136 (181 aa).

3 helical membrane passes run 6 to 26, 32 to 52, and 58 to 78; these read LIFV…ILLV, SAAG…GIVF, and WMNI…GGYI.

Belongs to the UPF0316 family.

It localises to the cell membrane. The protein is UPF0316 protein Bcer98_2136 of Bacillus cytotoxicus (strain DSM 22905 / CIP 110041 / 391-98 / NVH 391-98).